We begin with the raw amino-acid sequence, 560 residues long: Hemocyanin, units G and H (560 aa).

An intrachain disulfide couples C1 to C11. A unit G region spans residues C1 to E184. Residues C12–H14 constitute a cross-link (2'-(S-cysteinyl)-histidine (Cys-His)). Residues C93 and C98 are joined by a disulfide bond. N142 carries an N-linked (GlcNAc...) asparagine glycan. The segment at D185–R560 is unit H. H230 contributes to the Cu cation binding site. A disulfide bridge links C236 with C246. The N-linked (GlcNAc...) asparagine glycan is linked to N240. Residues C247–H249 constitute a cross-link (2'-(S-cysteinyl)-histidine (Cys-His)). Residues H249, H258, H358, H362, and H389 each coordinate Cu cation. Disulfide bonds link C348/C415 and C476/C482.

The protein belongs to the tyrosinase family. Hemocyanin subfamily. Decamers of large identical subunits (390 kDa), each containing 8 globular oxygen-binding functional units. It depends on Cu(2+) as a cofactor.

Hemocyanins are copper-containing oxygen carriers occurring freely dissolved in the hemolymph of many mollusks and arthropods. This chain is Hemocyanin, units G and H, found in Sepia officinalis (Common cuttlefish).